Reading from the N-terminus, the 188-residue chain is Methylated-DNA--protein-cysteine methyltransferase (188 aa).

Residues Tyr120, Gly121, and Arg134 each contribute to the DNA site. Cys151 serves as the catalytic Nucleophile; methyl group acceptor. DNA is bound at residue Ser157.

It belongs to the MGMT family.

It is found in the nucleus. It carries out the reaction a 6-O-methyl-2'-deoxyguanosine in DNA + L-cysteinyl-[protein] = S-methyl-L-cysteinyl-[protein] + a 2'-deoxyguanosine in DNA. It catalyses the reaction a 4-O-methyl-thymidine in DNA + L-cysteinyl-[protein] = a thymidine in DNA + S-methyl-L-cysteinyl-[protein]. Functionally, involved in the cellular defense against the biological effects of O6-methylguanine (O6-MeG) and O4-methylthymine (O4-MeT) in DNA. Repairs the methylated nucleobase in DNA by stoichiometrically transferring the methyl group to a cysteine residue in the enzyme. This is a suicide reaction: the enzyme is irreversibly inactivated. Prefers double-stranded DNA over single-stranded DNA as substrate. In Saccharomyces cerevisiae (strain YJM789) (Baker's yeast), this protein is Methylated-DNA--protein-cysteine methyltransferase (MGT1).